We begin with the raw amino-acid sequence, 1040 residues long: Multidrug resistance protein MdtB (1040 aa).

Helical transmembrane passes span 15 to 37 (LFILRPVATTLLMAAILLAGIIG), 345 to 362 (FELMLAIALVVMIIYLFL), 367 to 389 (ATIIPGVAVPLSLIGTFAVMVFL), 396 to 418 (LTLMALTIATGFVVDDAIVVIEN), 438 to 460 (GEIGFTIISLTFSLIAVLIPLLF), 472 to 494 (FAVTLAVAILISAVVSLTLTPMM), 535 to 557 (HPWLTLSVAFATLLLSVMLWITI), 867 to 889 (VWLIVAAVVAMYIVLGVLYESFI), 909 to 931 (LIIAGSELDIIAIIGIILLIGIV), 968 to 990 (ILMTTLAALLGALPLMLSTGVGA), and 1000 to 1022 (MVGGLLVSQVLTLFTTPVIYLLF).

The protein belongs to the resistance-nodulation-cell division (RND) (TC 2.A.6) family. MdtB subfamily. In terms of assembly, part of a tripartite efflux system composed of MdtA, MdtB and MdtC. MdtB forms a heteromultimer with MdtC.

It localises to the cell inner membrane. The sequence is that of Multidrug resistance protein MdtB from Salmonella typhi.